Here is a 430-residue protein sequence, read N- to C-terminus: 3-phosphoshikimate 1-carboxyvinyltransferase (430 aa).

3 residues coordinate 3-phosphoshikimate: Lys-23, Ser-24, and Arg-28. Lys-23 provides a ligand contact to phosphoenolpyruvate. The phosphoenolpyruvate site is built by Gly-95 and Arg-123. The 3-phosphoshikimate site is built by Ser-169, Gln-171, Asp-315, and Lys-342. Gln-171 contributes to the phosphoenolpyruvate binding site. The Proton acceptor role is filled by Asp-315. Residues Arg-346 and Arg-388 each coordinate phosphoenolpyruvate.

Belongs to the EPSP synthase family. Monomer.

It is found in the cytoplasm. It catalyses the reaction 3-phosphoshikimate + phosphoenolpyruvate = 5-O-(1-carboxyvinyl)-3-phosphoshikimate + phosphate. The protein operates within metabolic intermediate biosynthesis; chorismate biosynthesis; chorismate from D-erythrose 4-phosphate and phosphoenolpyruvate: step 6/7. Catalyzes the transfer of the enolpyruvyl moiety of phosphoenolpyruvate (PEP) to the 5-hydroxyl of shikimate-3-phosphate (S3P) to produce enolpyruvyl shikimate-3-phosphate and inorganic phosphate. The chain is 3-phosphoshikimate 1-carboxyvinyltransferase from Streptococcus pyogenes serotype M1.